Consider the following 345-residue polypeptide: Phosphoribosylformylglycinamidine cyclo-ligase (345 aa).

The protein belongs to the AIR synthase family.

It localises to the cytoplasm. The enzyme catalyses 2-formamido-N(1)-(5-O-phospho-beta-D-ribosyl)acetamidine + ATP = 5-amino-1-(5-phospho-beta-D-ribosyl)imidazole + ADP + phosphate + H(+). It participates in purine metabolism; IMP biosynthesis via de novo pathway; 5-amino-1-(5-phospho-D-ribosyl)imidazole from N(2)-formyl-N(1)-(5-phospho-D-ribosyl)glycinamide: step 2/2. This Shouchella clausii (strain KSM-K16) (Alkalihalobacillus clausii) protein is Phosphoribosylformylglycinamidine cyclo-ligase.